The sequence spans 880 residues: Xylosyltransferase oxt (880 aa).

Topologically, residues 1-14 (MEQSVSARWLRRYR) are cytoplasmic. The chain crosses the membrane as a helical; Signal-anchor for type II membrane protein span at residues 15–35 (PVLIILVLIFGIQLFLAYKSV). The Lumenal portion of the chain corresponds to 36 to 880 (DIGGGSGSGL…PKSDVDALLK (845 aa)). Disulfide bonds link C87/C115, C131/C469, C488/C501, and C490/C499. N-linked (GlcNAc...) asparagine glycans are attached at residues N135 and N139. Residues 138–232 (ANVSLGCYRD…FYAMNIYETG (95 aa)) form the WSC domain. UDP-alpha-D-xylose-binding positions include D287 and 316-318 (TIW). A glycan (N-linked (GlcNAc...) asparagine) is linked at N346. 419 to 420 (DW) lines the UDP-alpha-D-xylose pocket. Residues S502 and 526 to 527 (RK) each bind UDP-alpha-D-xylose. N-linked (GlcNAc...) asparagine glycosylation is found at N700 and N729. An intrachain disulfide couples C846 to C859.

This sequence belongs to the glycosyltransferase 14 family. XylT subfamily. Ca(2+) is required as a cofactor. Requires Mn(2+) as cofactor. The cofactor is Mg(2+).

It localises to the endoplasmic reticulum membrane. It is found in the golgi apparatus membrane. It catalyses the reaction UDP-alpha-D-xylose + L-seryl-[protein] = 3-O-(beta-D-xylosyl)-L-seryl-[protein] + UDP + H(+). The protein operates within glycan metabolism; chondroitin sulfate biosynthesis. Its pathway is glycan metabolism; heparan sulfate biosynthesis. Its function is as follows. Catalyzes the first step in biosynthesis of glycosaminoglycan. Transfers D-xylose from UDP-D-xylose to specific serine residues of the core protein. This chain is Xylosyltransferase oxt, found in Drosophila pseudoobscura pseudoobscura (Fruit fly).